A 233-amino-acid chain; its full sequence is Ribonuclease 3 (233 aa).

One can recognise an RNase III domain in the interval 4 to 126 (LNKLMERLGH…IVGSIYIDAG (123 aa)). Glu39 is a binding site for Mg(2+). Residue Asp43 is part of the active site. Mg(2+) is bound by residues Asp112 and Glu115. Glu115 is an active-site residue. Positions 153 to 222 (DAKSLLQEWL…AKRFLELLDD (70 aa)) constitute a DRBM domain.

This sequence belongs to the ribonuclease III family. As to quaternary structure, homodimer. Requires Mg(2+) as cofactor.

It is found in the cytoplasm. The catalysed reaction is Endonucleolytic cleavage to 5'-phosphomonoester.. Functionally, digests double-stranded RNA. Involved in the processing of primary rRNA transcript to yield the immediate precursors to the large and small rRNAs (23S and 16S). Processes some mRNAs, and tRNAs when they are encoded in the rRNA operon. Processes pre-crRNA and tracrRNA of type II CRISPR loci if present in the organism. This Coxiella burnetii (strain CbuG_Q212) (Coxiella burnetii (strain Q212)) protein is Ribonuclease 3.